A 524-amino-acid chain; its full sequence is Citrate exporter 1 (524 aa).

The tract at residues 1-49 (MSSTTSSSRSDLEKVPVPQVTPRDSDSDKGSLSPEPSTLEAQSSEKPPH) is disordered. Positions 34–45 (PEPSTLEAQSSE) are enriched in polar residues. A helical membrane pass occupies residues 60 to 80 (MVCIVSLAAIFSPLSSNIYFP). An N-linked (GlcNAc...) asparagine glycan is attached at asparagine 90. 5 helical membrane-spanning segments follow: residues 95–115 (LATL…SFWG), 125–145 (PVFI…AESK), 155–175 (ALQA…IGDI), 186–206 (GIFG…GGIF), and 215–235 (IFWF…VLLP). Asparagine 244 carries N-linked (GlcNAc...) asparagine glycosylation. Helical transmembrane passes span 296–316 (VFIT…VTSS), 332–352 (IGLT…LVGY), 395–415 (TWWV…SLRT), 417–437 (LAVP…LFTI), 459–479 (LMRC…LDAL), and 481–501 (PDYT…LLYV).

It belongs to the major facilitator superfamily.

It localises to the cell membrane. It catalyses the reaction citrate(in) = citrate(out). In terms of biological role, transmembrane transporter that exports citrate across the cell membrane. The chain is Citrate exporter 1 from Aspergillus niger (strain ATCC 1015 / CBS 113.46 / FGSC A1144 / LSHB Ac4 / NCTC 3858a / NRRL 328 / USDA 3528.7).